The chain runs to 87 residues: Small ribosomal subunit protein bS16 (87 aa).

This sequence belongs to the bacterial ribosomal protein bS16 family.

This is Small ribosomal subunit protein bS16 from Psychrobacter sp. (strain PRwf-1).